The primary structure comprises 468 residues: Probable soluble pyridine nucleotide transhydrogenase (468 aa).

FAD is bound at residue 33–42; it reads ERGRMLGGVC.

It belongs to the class-I pyridine nucleotide-disulfide oxidoreductase family. FAD is required as a cofactor.

Its subcellular location is the cytoplasm. The enzyme catalyses NAD(+) + NADPH = NADH + NADP(+). Conversion of NADPH, generated by peripheral catabolic pathways, to NADH, which can enter the respiratory chain for energy generation. In Mycobacterium bovis (strain ATCC BAA-935 / AF2122/97), this protein is Probable soluble pyridine nucleotide transhydrogenase (sthA).